A 65-amino-acid chain; its full sequence is Large ribosomal subunit protein bL33c (65 aa).

Belongs to the bacterial ribosomal protein bL33 family.

The protein localises to the plastid. The protein resides in the chloroplast. This Pyropia yezoensis (Susabi-nori) protein is Large ribosomal subunit protein bL33c.